We begin with the raw amino-acid sequence, 623 residues long: Glutathione import ATP-binding protein GsiA (623 aa).

ABC transporter domains follow at residues 15 to 269 and 314 to 564; these read VENL…RALL and LRVR…RKLL. ATP-binding positions include 49–56 and 357–364; these read GESGSGKS.

Belongs to the ABC transporter superfamily. Glutathione importer (TC 3.A.1.5.11) family. In terms of assembly, the complex is composed of two ATP-binding proteins (GsiA), two transmembrane proteins (GsiC and GsiD) and a solute-binding protein (GsiB).

It is found in the cell inner membrane. The catalysed reaction is glutathione(out) + ATP + H2O = glutathione(in) + ADP + phosphate + H(+). Functionally, part of the ABC transporter complex GsiABCD involved in glutathione import. Responsible for energy coupling to the transport system. The chain is Glutathione import ATP-binding protein GsiA from Escherichia coli O157:H7.